The chain runs to 352 residues: MTELELLGPRASGEPLGTAILKAVAEDFQVDEVLDIPLSGQGEHLWLWVEKRDLNTEEAARRLARAAGVPVRSISYAGLKDRQALTRQWFSLHLPGKADPDLSRAEDASLRVLKQVRHQRKLQRGAHSANGFTLRLTALAADHQAVDARLEQLRQQGVPNYFGTQRFGHGGGNVHDALDWAARKALPEQRNVRSRLLSAGRSYLFNQLLAARVADGSWARAQVGDLLAFTDSRSFFPAGEAECADPRLAILDLHPTGPMWGEGASPAGGAPAQLENAIGARQPALCQWLAQAGMDHERRILRLPIGGLTWHYPEPDILQLEFVLPAGCFATVVVREVVDLVSAGQTDSPCVF.

The active-site Nucleophile is the Asp-81. One can recognise a TRUD domain in the interval 157 to 303 (GVPNYFGTQR…MDHERRILRL (147 aa)).

It belongs to the pseudouridine synthase TruD family.

The catalysed reaction is uridine(13) in tRNA = pseudouridine(13) in tRNA. Functionally, responsible for synthesis of pseudouridine from uracil-13 in transfer RNAs. The polypeptide is tRNA pseudouridine synthase D (Pseudomonas putida (strain ATCC 47054 / DSM 6125 / CFBP 8728 / NCIMB 11950 / KT2440)).